The chain runs to 228 residues: MLKDIFLFWGSLFGYDHTAIYIFHFLLVVAITMFIAVAVTKSMRLVPRGLQNIIEAYLSGVIALGKDAMGSEKLARKYMPLIATIGFIVFLSNIIGLIPGFEAPTASLNLTLSLTLCVFFYYHFEGIREKGFIKYFAGFCGPVKAIAPFMFVIEVISHLSRIISLSFRLFGNIKGDDLFLLVMLTLAPVLVPMIPYALLSFMAILQAFIFMVLSYVYLAGAVVVDEEH.

The next 6 helical transmembrane spans lie at 19-39, 81-101, 107-127, 136-156, 178-198, and 204-224; these read AIYI…AVAV, LIAT…IPGF, SLNL…FEGI, FAGF…IEVI, LFLL…PYAL, and ILQA…AVVV.

This sequence belongs to the ATPase A chain family. As to quaternary structure, F-type ATPases have 2 components, CF(1) - the catalytic core - and CF(0) - the membrane proton channel. CF(1) has five subunits: alpha(3), beta(3), gamma(1), delta(1), epsilon(1). CF(0) has three main subunits: a(1), b(2) and c(9-12). The alpha and beta chains form an alternating ring which encloses part of the gamma chain. CF(1) is attached to CF(0) by a central stalk formed by the gamma and epsilon chains, while a peripheral stalk is formed by the delta and b chains.

The protein resides in the cell inner membrane. Functionally, key component of the proton channel; it plays a direct role in the translocation of protons across the membrane. The sequence is that of ATP synthase subunit a from Campylobacter hominis (strain ATCC BAA-381 / DSM 21671 / CCUG 45161 / LMG 19568 / NCTC 13146 / CH001A).